The primary structure comprises 88 residues: Small ribosomal subunit protein bS16 (88 aa).

This sequence belongs to the bacterial ribosomal protein bS16 family.

In Anaeromyxobacter sp. (strain Fw109-5), this protein is Small ribosomal subunit protein bS16.